A 53-amino-acid chain; its full sequence is ATP synthase protein 8 (53 aa).

The helical transmembrane segment at 6–26 (PIGWLSLFIIFSLTFILFSMM) threads the bilayer.

It belongs to the ATPase protein 8 family. As to quaternary structure, F-type ATPases have 2 components, CF(1) - the catalytic core - and CF(0) - the membrane proton channel.

Its subcellular location is the mitochondrion membrane. Its function is as follows. Mitochondrial membrane ATP synthase (F(1)F(0) ATP synthase or Complex V) produces ATP from ADP in the presence of a proton gradient across the membrane which is generated by electron transport complexes of the respiratory chain. F-type ATPases consist of two structural domains, F(1) - containing the extramembraneous catalytic core and F(0) - containing the membrane proton channel, linked together by a central stalk and a peripheral stalk. During catalysis, ATP synthesis in the catalytic domain of F(1) is coupled via a rotary mechanism of the central stalk subunits to proton translocation. Part of the complex F(0) domain. Minor subunit located with subunit a in the membrane. This Ceratitis capitata (Mediterranean fruit fly) protein is ATP synthase protein 8 (mt:ATPase8).